We begin with the raw amino-acid sequence, 206 residues long: Large ribosomal subunit protein uL4 (206 aa).

Residues 55-80 (AFVSGGGAKPWRQKGTGRARSGSNRS) are disordered.

It belongs to the universal ribosomal protein uL4 family. In terms of assembly, part of the 50S ribosomal subunit.

Functionally, one of the primary rRNA binding proteins, this protein initially binds near the 5'-end of the 23S rRNA. It is important during the early stages of 50S assembly. It makes multiple contacts with different domains of the 23S rRNA in the assembled 50S subunit and ribosome. Forms part of the polypeptide exit tunnel. The protein is Large ribosomal subunit protein uL4 of Nitratidesulfovibrio vulgaris (strain DSM 19637 / Miyazaki F) (Desulfovibrio vulgaris).